Here is a 398-residue protein sequence, read N- to C-terminus: Probable elongation factor 1-gamma (398 aa).

Residues Gly-66 to Phe-199 form the GST C-terminal domain. Positions Ala-210–Lys-248 are disordered. Over residues Pro-211–Lys-221 the composition is skewed to basic and acidic residues. In terms of domain architecture, EF-1-gamma C-terminal spans Ser-239–Lys-398.

In terms of assembly, EF-1 is composed of four subunits: alpha, beta, delta, and gamma. AMPylated by fic-1.

Probably plays a role in anchoring the complex to other cellular components. This is Probable elongation factor 1-gamma from Caenorhabditis elegans.